Here is a 44-residue protein sequence, read N- to C-terminus: Large ribosomal subunit protein bL34 (44 aa).

Belongs to the bacterial ribosomal protein bL34 family.

This Variovorax paradoxus (strain S110) protein is Large ribosomal subunit protein bL34.